A 222-amino-acid chain; its full sequence is Putative O-methyltransferase MAV_1364 (222 aa).

S-adenosyl-L-methionine is bound by residues V49, E71, 73–74 (GT), S79, D97, and I98. D145 provides a ligand contact to substrate. D147 contributes to the S-adenosyl-L-methionine binding site.

It belongs to the class I-like SAM-binding methyltransferase superfamily. Cation-dependent O-methyltransferase family.

This is Putative O-methyltransferase MAV_1364 from Mycobacterium avium (strain 104).